The following is a 187-amino-acid chain: Orotate phosphoribosyltransferase (187 aa).

Residues Arg-103, Lys-104, Lys-107, and 129–137 (EDVTTSGGS) contribute to the 5-phospho-alpha-D-ribose 1-diphosphate site. Residues Thr-133 and Arg-161 each contribute to the orotate site.

This sequence belongs to the purine/pyrimidine phosphoribosyltransferase family. PyrE subfamily. As to quaternary structure, homodimer. It depends on Mg(2+) as a cofactor.

The enzyme catalyses orotidine 5'-phosphate + diphosphate = orotate + 5-phospho-alpha-D-ribose 1-diphosphate. Its pathway is pyrimidine metabolism; UMP biosynthesis via de novo pathway; UMP from orotate: step 1/2. In terms of biological role, catalyzes the transfer of a ribosyl phosphate group from 5-phosphoribose 1-diphosphate to orotate, leading to the formation of orotidine monophosphate (OMP). The chain is Orotate phosphoribosyltransferase from Methanosarcina acetivorans (strain ATCC 35395 / DSM 2834 / JCM 12185 / C2A).